Here is a 546-residue protein sequence, read N- to C-terminus: MSAPQQQQQSQQKQQQHVRVVEQQQVEPAEAVTSSMESESISASKELTGLTHECGVFGAIACGDWPTQMDIAHVICLGLVALQHRGQESAGIATSEGKCSKNFNVHKGMGMISTLFNDDSMKKLRGNLGIGHTRYSTAGGSGVVNCQPFEVHTTHGALALAHNGELVNNESLRREVLARGVGLSTHSDSELIAQSLCCAPEDVSELDGPNWPARIRHFMMLAPLSYSLVIMLKDKIYAVRDTYGNRPLCIGKIVPINAGHGNNLDTPADGWVVSSESCGFLSIGARYVREVEPGEIVELSRSGYRTVDIVERPDFKRMAFCIFEYVYFARGDSIFEGQMVYTVRLQCGRQLWREAPVEADIVSSVPESGTAAAHGYARESGIEFAEVLCRNRYVGRTFIQPSTRLRQLGVAKKFGALSENVAGKRLVLIDDSIVRGNTIGPIIKLLRDAGAREVHIRIASPPLQYPCYMGINIPTREELIANKLNPDQLARHVGADSLAYLSVEGLVEAVQLKHRDAGDSKSKGTGHCTACLTGEYPGGLPDELSW.

A compositionally biased stretch (low complexity) spans 1–26 (MSAPQQQQQSQQKQQQHVRVVEQQQV). Positions 1-39 (MSAPQQQQQSQQKQQQHVRVVEQQQVEPAEAVTSSMESE) are disordered. A propeptide spanning residues 1 to 53 (MSAPQQQQQSQQKQQQHVRVVEQQQVEPAEAVTSSMESESISASKELTGLTHE) is cleaved from the precursor. Cys54 acts as the Nucleophile in catalysis. The 249-residue stretch at 54 to 302 (CGVFGAIACG…PGEIVELSRS (249 aa)) folds into the Glutamine amidotransferase type-2 domain. Ser113 is modified (phosphoserine). Thr114 carries the post-translational modification Phosphothreonine. Phosphoserine is present on Ser120. Cys321 contributes to the [4Fe-4S] cluster binding site. The Mg(2+) site is built by Ser368, Asp430, and Asp431. Positions 467, 528, and 531 each coordinate [4Fe-4S] cluster.

The protein in the C-terminal section; belongs to the purine/pyrimidine phosphoribosyltransferase family. Mg(2+) serves as cofactor. Requires [4Fe-4S] cluster as cofactor.

It catalyses the reaction 5-phospho-beta-D-ribosylamine + L-glutamate + diphosphate = 5-phospho-alpha-D-ribose 1-diphosphate + L-glutamine + H2O. It functions in the pathway purine metabolism; IMP biosynthesis via de novo pathway; N(1)-(5-phospho-D-ribosyl)glycinamide from 5-phospho-alpha-D-ribose 1-diphosphate: step 1/2. In terms of biological role, involved in the first step (and regulatory point) of the de novo biosynthesis of purine nucleotides, where it catalyzes the transfer of glutamine amide to 5-phospho-alpha-D-ribose 1-diphosphate. In Drosophila melanogaster (Fruit fly), this protein is Amidophosphoribosyltransferase (Prat).